The chain runs to 154 residues: Transcriptional repressor NrdR (154 aa).

The disordered stretch occupies residues 1–22; sequence MECPNCHKNASRVIDSRPSDEN. Residues 3-34 fold into a zinc finger; it reads CPNCHKNASRVIDSRPSDENRAIRRRRECENC. The region spanning 49–139 is the ATP-cone domain; sequence LLVVKNDGTR…IYRQFKDVSG (91 aa).

The protein belongs to the NrdR family. The cofactor is Zn(2+).

Functionally, negatively regulates transcription of bacterial ribonucleotide reductase nrd genes and operons by binding to NrdR-boxes. The sequence is that of Transcriptional repressor NrdR from Lactobacillus johnsonii (strain CNCM I-12250 / La1 / NCC 533).